Reading from the N-terminus, the 488-residue chain is 1-aminocyclopropane-1-carboxylate synthase-like protein 1 (488 aa).

Lys273 bears the N6-(pyridoxal phosphate)lysine mark.

This sequence belongs to the class-I pyridoxal-phosphate-dependent aminotransferase family. In terms of assembly, homodimer. As to expression, expressed in young leaves and flowers. Not expressed in roots.

This is 1-aminocyclopropane-1-carboxylate synthase-like protein 1 (ACS1) from Arabidopsis thaliana (Mouse-ear cress).